The primary structure comprises 74 residues: Sodium channel neurotoxin MeuNaTxalpha-6 (74 aa).

Residues 1–7 (LMTGVES) form the signal peptide. Residues 9-73 (RDAYIAKPHN…VPIRIPGKCH (65 aa)) enclose the LCN-type CS-alpha/beta domain. 4 cysteine pairs are disulfide-bonded: C19–C72, C23–C45, C31–C55, and C35–C57. Position 74 (R74) is a propeptide, removed by a carboxypeptidase.

Belongs to the long (4 C-C) scorpion toxin superfamily. Sodium channel inhibitor family. Alpha subfamily. Expressed by the venom gland.

It localises to the secreted. Alpha toxins bind voltage-independently at site-3 of sodium channels (Nav) and inhibit the inactivation of the activated channels, thereby blocking neuronal transmission. The sequence is that of Sodium channel neurotoxin MeuNaTxalpha-6 from Mesobuthus eupeus (Lesser Asian scorpion).